A 1042-amino-acid chain; its full sequence is Putative type I restriction enzyme MjaIXP endonuclease subunit (1042 aa).

The Helicase ATP-binding domain maps to 323 to 487 (GETPEDRRIG…FLVFGDYISA (165 aa)). The short motif at 439–442 (DEAH) is the DEAH box element. The Helicase C-terminal domain maps to 551-731 (LTEDYLSKVS…DIKVVIEEMK (181 aa)).

This sequence belongs to the HsdR family. In terms of assembly, the type I restriction/modification system is composed of three polypeptides R, M and S.

It carries out the reaction Endonucleolytic cleavage of DNA to give random double-stranded fragments with terminal 5'-phosphates, ATP is simultaneously hydrolyzed.. In terms of biological role, the restriction (R) subunit of a type I restriction enzyme that recognizes 5'-CCAN(5)GTR-3' and cleaves a random distance away. The R subunit is required for both nuclease and ATPase activities, but not for modification. After locating a non-methylated recognition site, the enzyme complex serves as a molecular motor that translocates DNA in an ATP-dependent manner until a collision occurs that triggers cleavage. In Methanocaldococcus jannaschii (strain ATCC 43067 / DSM 2661 / JAL-1 / JCM 10045 / NBRC 100440) (Methanococcus jannaschii), this protein is Putative type I restriction enzyme MjaIXP endonuclease subunit.